Here is a 135-residue protein sequence, read N- to C-terminus: Small ribosomal subunit protein uS12 (135 aa).

Residues 1–29 (MPTINQLVRKGREKVEKKSKAPALQGNPQ) are disordered. Residue D89 is modified to 3-methylthioaspartic acid. Residues 106 to 135 (GVKDRKQSRSKYGAKRPKPGQAAATTGKKK) form a disordered region. Residues 113–123 (SRSKYGAKRPK) show a composition bias toward basic residues.

This sequence belongs to the universal ribosomal protein uS12 family. Part of the 30S ribosomal subunit. Contacts proteins S8 and S17. May interact with IF1 in the 30S initiation complex.

Functionally, with S4 and S5 plays an important role in translational accuracy. Interacts with and stabilizes bases of the 16S rRNA that are involved in tRNA selection in the A site and with the mRNA backbone. Located at the interface of the 30S and 50S subunits, it traverses the body of the 30S subunit contacting proteins on the other side and probably holding the rRNA structure together. The combined cluster of proteins S8, S12 and S17 appears to hold together the shoulder and platform of the 30S subunit. The protein is Small ribosomal subunit protein uS12 of Sulfurihydrogenibium sp. (strain YO3AOP1).